The following is a 67-amino-acid chain: Prokaryotic ubiquitin-like protein Pup (67 aa).

Residues 1–36 form a disordered region; the sequence is MPQQFEQPQAQQAATQEDDALATTQAAAQTESADQA. Positions 23-61 are ARC ATPase binding; it reads TTQAAAQTESADQADVLDDILDDIESTLETNAEEYVNSF. Glu-67 participates in a covalent cross-link: Isoglutamyl lysine isopeptide (Glu-Lys) (interchain with K-? in acceptor proteins).

Belongs to the prokaryotic ubiquitin-like protein family. As to quaternary structure, strongly interacts with the proteasome-associated ATPase ARC through a hydrophobic interface; the interacting region of Pup lies in its C-terminal half. There is one Pup binding site per ARC hexamer ring.

Its pathway is protein degradation; proteasomal Pup-dependent pathway. Its function is as follows. Protein modifier that is covalently attached to lysine residues of substrate proteins, thereby targeting them for proteasomal degradation. The tagging system is termed pupylation. In Bifidobacterium longum (strain DJO10A), this protein is Prokaryotic ubiquitin-like protein Pup.